The chain runs to 386 residues: tRNA-specific adenosine deaminase subunit tad2 (386 aa).

Positions 212–322 constitute a CMP/dCMP-type deaminase domain; it reads TQHETYMKLA…GNDRFGGCGS (111 aa). Zn(2+) is bound at residue H263. The Proton donor role is filled by E265. The Zn(2+) site is built by C293 and C296.

It belongs to the cytidine and deoxycytidylate deaminase family. ADAT2 subfamily. Heterodimer with Tad3. Zn(2+) is required as a cofactor.

It catalyses the reaction adenosine(34) in tRNA + H2O + H(+) = inosine(34) in tRNA + NH4(+). Structural subunit of tRNA-specific adenosine deaminase, which deaminates adenosine-34 (the first, also called wobble position of the anticodon) to inosine in many tRNAs. Inosine-34 allows the decoding of 3 different nucleotides at the third position of mRNA codons, as inosine is able to pair with U, C, and A. The wobble inosine tRNA modification is essential for cell cycle progression in the G1/S and G2/M transitions in fission yeast. In Schizosaccharomyces pombe (strain 972 / ATCC 24843) (Fission yeast), this protein is tRNA-specific adenosine deaminase subunit tad2 (tad2).